The chain runs to 243 residues: Secreted RxLR effector protein 28 (243 aa).

The signal sequence occupies residues 1–26 (MHVSRIIAHIALATAITATTVSPTDA). Positions 49–52 (RGLR) match the RxLR motif. The disordered stretch occupies residues 187-243 (NVDEDKGQNFGHSVSGPPTTTLTGPHTKSGIPPFENLVAPAKGSMPNTRRNGYQFFE). A compositionally biased stretch (low complexity) spans 199-216 (SVSGPPTTTLTGPHTKSG).

It belongs to the RxLR effector family.

The protein resides in the secreted. The protein localises to the host cytoplasm. It is found in the host nucleus. Its function is as follows. Effector that significantly enhances susceptibilities of grapevine and tobacco to pathogens. Acts as a broad suppressor of cell death to interrupt plant immunity. Completely inhibits cell death induced by cell death-inducing proteins, including the PAMP elicitor INF1 from P.infestans. Reduces the transcriptional levels of the defense-related genes and impairs the H(2)O(2) accumulation in N.benthamiana. The protein is Secreted RxLR effector protein 28 of Plasmopara viticola (Downy mildew of grapevine).